A 691-amino-acid polypeptide reads, in one-letter code: Elongation factor G (691 aa).

Residues 8–282 (ERVRNIGIAA…AVVDYLPAPI (275 aa)) form the tr-type G domain. GTP-binding positions include 17–24 (AHIDAGKT), 81–85 (DTPGH), and 135–138 (NKMD).

The protein belongs to the TRAFAC class translation factor GTPase superfamily. Classic translation factor GTPase family. EF-G/EF-2 subfamily.

The protein localises to the cytoplasm. In terms of biological role, catalyzes the GTP-dependent ribosomal translocation step during translation elongation. During this step, the ribosome changes from the pre-translocational (PRE) to the post-translocational (POST) state as the newly formed A-site-bound peptidyl-tRNA and P-site-bound deacylated tRNA move to the P and E sites, respectively. Catalyzes the coordinated movement of the two tRNA molecules, the mRNA and conformational changes in the ribosome. This is Elongation factor G from Synechococcus sp. (strain WH7803).